We begin with the raw amino-acid sequence, 688 residues long: PR domain zinc finger protein 8 (688 aa).

Residues 16–131 (KAVQQCLTDI…KDEELLVWYG (116 aa)) form the SET domain. Tyr130 serves as a coordination point for S-adenosyl-L-methionine. Residues 154–182 (YTCLECSQRFQFEFPYVAHLRFRCPKRLH) form a C2H2-type 1 zinc finger. Disordered regions lie at residues 184–309 (TDAN…GCKG) and 397–506 (EEAA…PARS). Residues 192-208 (QGGGLGTKDHGGGGGGK) show a composition bias toward gly residues. Composition is skewed to low complexity over residues 209–219 (EQQQQQQQQQQ) and 275–284 (GSSSCVAAPG). Composition is skewed to gly residues over residues 414 to 424 (AGGGVAGGGSN) and 470 to 489 (LGGGGGAGTAGTAGGSGGGQ). 2 consecutive C2H2-type zinc fingers follow at residues 624-647 (NWCAKCNASFRMTSDLVYHMRSHH) and 665-687 (LKCPICNESFRERHHLSRHMTSH).

This sequence belongs to the class V-like SAM-binding methyltransferase superfamily. In terms of assembly, interacts with BHLHE22. Interacts with EPM2A and NHLRC1. This interaction sequesters EPM2A and NHLRC1 to the nucleus. Expressed in brain, heart, liver, testes, retina. Highest expression is observed in the retina and hippocampus; moderately expressed in the cortex and cerebellum. In the retina, it is expressed in bipolar and amacrine cells.

The protein localises to the nucleus. Its function is as follows. Probable histone methyltransferase, preferentially acting on 'Lys-9' of histone H3. Histone methyltransferase activity has not been confirmed in other species. Involved in the control of steroidogenesis through transcriptional repression of steroidogenesis marker genes such as CYP17A1 and LHCGR. Forms with BHLHE22 a transcriptional repressor complex controlling genes involved in neural development and neuronal differentiation. In the retina, it is required for rod bipolar and type 2 OFF-cone bipolar cell survival. The chain is PR domain zinc finger protein 8 (Prdm8) from Mus musculus (Mouse).